The chain runs to 359 residues: 3-dehydroquinate synthase (359 aa).

Residues 71 to 76 (DGEAYK), 105 to 109 (GVVGD), 129 to 130 (TT), Lys142, and Lys151 contribute to the NAD(+) site. The Zn(2+) site is built by Glu184, His247, and His264.

This sequence belongs to the sugar phosphate cyclases superfamily. Dehydroquinate synthase family. Requires Co(2+) as cofactor. Zn(2+) serves as cofactor. It depends on NAD(+) as a cofactor.

Its subcellular location is the cytoplasm. The enzyme catalyses 7-phospho-2-dehydro-3-deoxy-D-arabino-heptonate = 3-dehydroquinate + phosphate. It functions in the pathway metabolic intermediate biosynthesis; chorismate biosynthesis; chorismate from D-erythrose 4-phosphate and phosphoenolpyruvate: step 2/7. Catalyzes the conversion of 3-deoxy-D-arabino-heptulosonate 7-phosphate (DAHP) to dehydroquinate (DHQ). This Burkholderia cenocepacia (strain HI2424) protein is 3-dehydroquinate synthase.